The chain runs to 636 residues: Putative ankyrin repeat protein L766 (636 aa).

ANK repeat units lie at residues 63-97, 99-129, 130-159, 161-190, 230-259, 261-284, 322-355, 372-400, 425-455, 517-546, and 548-575; these read NNYLTSHVIKSTKYSLLDVNTVQMLLDYKDPDYEL, STCHLYIFYMTKNRFDICDYLIASNIKYIDS, FGNISLLNSTNLNNYQLIKYIIDNNEFFNC, YYYLMLGILRYTKFYDLVDYILELISKSNN, FDEKVLFDTVICNNFELTKYLVEKGFNYDF, TIINSNVKFDVLKYFIELGNYLTD, SRIIHFEFYLLDYLTNKLNIIELIDLDLLMKTSI, NPDEYMEFAIKHDICIAKKLMELGGNIPD, DSLENLLPKIINNCDSEIIMYIIKKLTDTTI, NSIELLFVVTLSENIELFKLLLEINCNDNN, and LSWAFVFSIGCFKLMKYIVDNYNIDIYQ.

This is Putative ankyrin repeat protein L766 from Acanthamoeba polyphaga mimivirus (APMV).